The following is a 284-amino-acid chain: Diaminopimelate epimerase (284 aa).

The substrate site is built by Asn20, Gln53, and Asn73. Cys82 (proton donor) is an active-site residue. Residues 83 to 84 (GN), Asn167, Asn200, and 218 to 219 (ER) each bind substrate. Cys227 (proton acceptor) is an active-site residue. 228-229 (GS) is a binding site for substrate.

The protein belongs to the diaminopimelate epimerase family. As to quaternary structure, homodimer.

The protein resides in the cytoplasm. The enzyme catalyses (2S,6S)-2,6-diaminopimelate = meso-2,6-diaminopimelate. Its pathway is amino-acid biosynthesis; L-lysine biosynthesis via DAP pathway; DL-2,6-diaminopimelate from LL-2,6-diaminopimelate: step 1/1. In terms of biological role, catalyzes the stereoinversion of LL-2,6-diaminopimelate (L,L-DAP) to meso-diaminopimelate (meso-DAP), a precursor of L-lysine and an essential component of the bacterial peptidoglycan. In Xanthomonas axonopodis pv. citri (strain 306), this protein is Diaminopimelate epimerase.